The primary structure comprises 555 residues: Formate--tetrahydrofolate ligase (555 aa).

ATP is bound at residue 65 to 72 (TPAGEGKS).

It belongs to the formate--tetrahydrofolate ligase family.

The enzyme catalyses (6S)-5,6,7,8-tetrahydrofolate + formate + ATP = (6R)-10-formyltetrahydrofolate + ADP + phosphate. The protein operates within one-carbon metabolism; tetrahydrofolate interconversion. The chain is Formate--tetrahydrofolate ligase from Staphylococcus aureus (strain MRSA252).